A 581-amino-acid polypeptide reads, in one-letter code: uncharacterized protein (581 aa).

S28 is modified (phosphoserine). 11 consecutive transmembrane segments (helical) span residues 61–81, 100–120, 125–145, 187–207, 214–234, 340–360, 382–402, 426–446, 458–478, 486–506, and 522–542; these read LVLI…AGSA, AGVL…ATFL, CVYL…ALVK, IYIL…GYIA, WIGW…LFTF, IFLF…DAWL, AVAI…IYGG, LWLM…FGIG, VGLG…MAYL, VLEA…VFTF, and ISIG…ILCG.

The protein belongs to the major facilitator superfamily.

Its subcellular location is the cytoplasm. The protein localises to the cell cortex. It localises to the membrane. This is an uncharacterized protein from Schizosaccharomyces pombe (strain 972 / ATCC 24843) (Fission yeast).